The primary structure comprises 276 residues: E3 ubiquitin-protein ligase CCNB1IP1 (276 aa).

The RING-type; atypical zinc-finger motif lies at 10-52 (CNYRKCRIKLSGYAWVTACSHIFCDQHGSGEFSRSPAICPACN). The stretch at 146 to 182 (MKKVLEEYKKKFSDISEKLMERNRQYQKLQGLYDSLR) forms a coiled coil.

As to quaternary structure, interacts with CCNB1, UBE2L3 and NF2. Post-translationally, ubiquitinated; autoubiquitinated. In terms of processing, phosphorylated by CDK1 on serine or threonine residues (in vitro). As to expression, expressed predominantly in the testes and 17 day embryos (corresponding to prophase I in females). Weakly or not expressed in other tissues.

It localises to the nucleus. Its subcellular location is the chromosome. It catalyses the reaction S-ubiquitinyl-[E2 ubiquitin-conjugating enzyme]-L-cysteine + [acceptor protein]-L-lysine = [E2 ubiquitin-conjugating enzyme]-L-cysteine + N(6)-ubiquitinyl-[acceptor protein]-L-lysine.. It participates in protein modification; protein ubiquitination. In terms of biological role, ubiquitin E3 ligase that acts as a limiting factor for crossing-over during meiosis: required during zygonema to limit the colocalization of RNF212 with MutS-gamma-associated recombination sites and thereby establish early differentiation of crossover and non-crossover sites. Later, it is directed by MutL-gamma to stably accumulate at designated crossover sites. Probably promotes the dissociation of RNF212 and MutS-gamma to allow the progression of recombination and the implementation of the final steps of crossing over. Modulates cyclin-B levels and participates in the regulation of cell cycle progression through the G2 phase. Overexpression causes delayed entry into mitosis. This Mus musculus (Mouse) protein is E3 ubiquitin-protein ligase CCNB1IP1 (Ccnb1ip1).